Here is a 337-residue protein sequence, read N- to C-terminus: MAVEMFYDADADLSIIQGRKVAVIGYGSQGHAHSLSLRDSGVEVKVGLKEGSKSRDKVTEQGLDVDTPAEVAKWADVIMLLAPDTAQAEIFTKDIEPNLEDGNALFFGHGLNIHFGLIKPPANVTIGMVAPKGPGHLVRRQFVDGKGVPCLIAVDQDPKGEGQALALSYAAAIGGARAGVIKTTFKDETETDLFGEQAVLCGGTEELVKTGFDVMVEAGYEPELAYFEVLHELKLIVDLMYEGGIARMNYSVSDTAEFGGYLSGPRVIDADTKKRMQDILKDIQDGTFVKRLVANVEGGNKELEGLRKQNAEHPIEVTGKKLRDLMSWVDRPITETA.

A KARI N-terminal Rossmann domain is found at 3 to 183 (VEMFYDADAD…GGARAGVIKT (181 aa)). Residues 26–29 (YGSQ), Lys49, Ser52, Ser54, and 84–87 (DTAQ) each bind NADP(+). Residue His109 is part of the active site. Gly135 contacts NADP(+). In terms of domain architecture, KARI C-terminal knotted spans 184-329 (TFKDETETDL…KKLRDLMSWV (146 aa)). 4 residues coordinate Mg(2+): Asp192, Glu196, Glu228, and Glu232. Ser253 contacts substrate.

It belongs to the ketol-acid reductoisomerase family. It depends on Mg(2+) as a cofactor.

The catalysed reaction is (2R)-2,3-dihydroxy-3-methylbutanoate + NADP(+) = (2S)-2-acetolactate + NADPH + H(+). It carries out the reaction (2R,3R)-2,3-dihydroxy-3-methylpentanoate + NADP(+) = (S)-2-ethyl-2-hydroxy-3-oxobutanoate + NADPH + H(+). It functions in the pathway amino-acid biosynthesis; L-isoleucine biosynthesis; L-isoleucine from 2-oxobutanoate: step 2/4. It participates in amino-acid biosynthesis; L-valine biosynthesis; L-valine from pyruvate: step 2/4. Involved in the biosynthesis of branched-chain amino acids (BCAA). Catalyzes an alkyl-migration followed by a ketol-acid reduction of (S)-2-acetolactate (S2AL) to yield (R)-2,3-dihydroxy-isovalerate. In the isomerase reaction, S2AL is rearranged via a Mg-dependent methyl migration to produce 3-hydroxy-3-methyl-2-ketobutyrate (HMKB). In the reductase reaction, this 2-ketoacid undergoes a metal-dependent reduction by NADPH to yield (R)-2,3-dihydroxy-isovalerate. The chain is Ketol-acid reductoisomerase (NADP(+)) from Mycolicibacterium gilvum (strain PYR-GCK) (Mycobacterium gilvum (strain PYR-GCK)).